The chain runs to 576 residues: Aspartate--tRNA ligase (576 aa).

Glutamate 170 is an L-aspartate binding site. Positions 194–197 (QLFK) are aspartate. Arginine 216 provides a ligand contact to L-aspartate. Residues 216–218 (RDE) and glutamine 225 contribute to the ATP site. Position 438 (histidine 438) interacts with L-aspartate. Glutamate 471 is an ATP binding site. An L-aspartate-binding site is contributed by arginine 478. Residue 523 to 526 (GLDR) participates in ATP binding.

This sequence belongs to the class-II aminoacyl-tRNA synthetase family. Type 1 subfamily. Homodimer.

It localises to the cytoplasm. The catalysed reaction is tRNA(Asp) + L-aspartate + ATP = L-aspartyl-tRNA(Asp) + AMP + diphosphate. Its function is as follows. Catalyzes the attachment of L-aspartate to tRNA(Asp) in a two-step reaction: L-aspartate is first activated by ATP to form Asp-AMP and then transferred to the acceptor end of tRNA(Asp). The polypeptide is Aspartate--tRNA ligase (Fervidobacterium nodosum (strain ATCC 35602 / DSM 5306 / Rt17-B1)).